The primary structure comprises 245 residues: 4-hydroxy-tetrahydrodipicolinate reductase (245 aa).

NAD(+) is bound by residues 8-13 (GSTGKM), 78-80 (GTT), and 102-105 (SANM). His134 serves as the catalytic Proton donor/acceptor. His135 lines the (S)-2,3,4,5-tetrahydrodipicolinate pocket. The active-site Proton donor is the Lys138. Residue 144-145 (GT) coordinates (S)-2,3,4,5-tetrahydrodipicolinate.

It belongs to the DapB family.

Its subcellular location is the cytoplasm. The catalysed reaction is (S)-2,3,4,5-tetrahydrodipicolinate + NAD(+) + H2O = (2S,4S)-4-hydroxy-2,3,4,5-tetrahydrodipicolinate + NADH + H(+). It carries out the reaction (S)-2,3,4,5-tetrahydrodipicolinate + NADP(+) + H2O = (2S,4S)-4-hydroxy-2,3,4,5-tetrahydrodipicolinate + NADPH + H(+). Its pathway is amino-acid biosynthesis; L-lysine biosynthesis via DAP pathway; (S)-tetrahydrodipicolinate from L-aspartate: step 4/4. In terms of biological role, catalyzes the conversion of 4-hydroxy-tetrahydrodipicolinate (HTPA) to tetrahydrodipicolinate. The sequence is that of 4-hydroxy-tetrahydrodipicolinate reductase from Rickettsia akari (strain Hartford).